The chain runs to 440 residues: Ribosomal protein uS12 methylthiotransferase RimO (440 aa).

Residues 6 to 116 (PKVGFVSLGC…VVTAVHEVVP (111 aa)) form the MTTase N-terminal domain. Positions 15, 51, 80, 149, 153, and 156 each coordinate [4Fe-4S] cluster. The region spanning 135 to 373 (LTPRHYAYLK…MAHQQAISAA (239 aa)) is the Radical SAM core domain. The region spanning 376–440 (QLKVGKEIEV…DEYDLWAELV (65 aa)) is the TRAM domain.

This sequence belongs to the methylthiotransferase family. RimO subfamily. [4Fe-4S] cluster serves as cofactor.

It is found in the cytoplasm. It catalyses the reaction L-aspartate(89)-[ribosomal protein uS12]-hydrogen + (sulfur carrier)-SH + AH2 + 2 S-adenosyl-L-methionine = 3-methylsulfanyl-L-aspartate(89)-[ribosomal protein uS12]-hydrogen + (sulfur carrier)-H + 5'-deoxyadenosine + L-methionine + A + S-adenosyl-L-homocysteine + 2 H(+). In terms of biological role, catalyzes the methylthiolation of an aspartic acid residue of ribosomal protein uS12. In Pseudomonas aeruginosa (strain UCBPP-PA14), this protein is Ribosomal protein uS12 methylthiotransferase RimO.